A 91-amino-acid chain; its full sequence is Defensin-like protein 220 (91 aa).

Residues 1-19 (MKTIFFFITFIVLVSSCTS) form the signal peptide. Cystine bridges form between C61/C78, C64/C83, and C68/C85.

This sequence belongs to the DEFL family.

It is found in the secreted. The sequence is that of Defensin-like protein 220 from Arabidopsis thaliana (Mouse-ear cress).